A 247-amino-acid chain; its full sequence is Fibroblast growth factor 14 (247 aa).

Disordered regions lie at residues methionine 1–glycine 38 and glutamate 216–threonine 247. Basic and acidic residues predominate over residues glutamine 15 to serine 25.

It belongs to the heparin-binding growth factors family. As to quaternary structure, interacts with SCN8A.

It is found in the nucleus. Probably involved in nervous system development and function. The sequence is that of Fibroblast growth factor 14 (Fgf14) from Rattus norvegicus (Rat).